We begin with the raw amino-acid sequence, 38 residues long: Toxin Bcg III 31.16 (38 aa).

Intrachain disulfides connect cysteine 4-cysteine 37, cysteine 6-cysteine 30, and cysteine 20-cysteine 38.

The protein belongs to the sea anemone type 3 (BDS) potassium channel toxin family.

Its subcellular location is the secreted. The protein localises to the nematocyst. In terms of biological role, possible modulator of crustacean voltage-gated sodium channels (Nav). In Bunodosoma cangicum (Sea anemone), this protein is Toxin Bcg III 31.16.